Consider the following 122-residue polypeptide: Large ribosomal subunit protein uL14c (122 aa).

This sequence belongs to the universal ribosomal protein uL14 family. As to quaternary structure, part of the 50S ribosomal subunit.

The protein resides in the plastid. The protein localises to the chloroplast. Binds to 23S rRNA. This chain is Large ribosomal subunit protein uL14c, found in Amborella trichopoda.